The chain runs to 234 residues: Glucosamine-6-phosphate deaminase (234 aa).

Catalysis depends on Asp62, which acts as the Proton acceptor; for enolization step. Asn128 functions as the For ring-opening step in the catalytic mechanism. His130 acts as the Proton acceptor; for ring-opening step in catalysis. Residue Glu135 is the For ring-opening step of the active site.

This sequence belongs to the glucosamine/galactosamine-6-phosphate isomerase family. NagB subfamily.

The enzyme catalyses alpha-D-glucosamine 6-phosphate + H2O = beta-D-fructose 6-phosphate + NH4(+). Its pathway is amino-sugar metabolism; N-acetylneuraminate degradation; D-fructose 6-phosphate from N-acetylneuraminate: step 5/5. In terms of biological role, catalyzes the reversible isomerization-deamination of glucosamine 6-phosphate (GlcN6P) to form fructose 6-phosphate (Fru6P) and ammonium ion. This Ligilactobacillus salivarius (strain UCC118) (Lactobacillus salivarius) protein is Glucosamine-6-phosphate deaminase.